A 31-amino-acid polypeptide reads, in one-letter code: Cyclotide mech-6 (31 aa).

A cross-link (cyclopeptide (Gly-Asn)) is located at residues Gly-1–Asn-31. Cystine bridges form between Cys-5-Cys-21, Cys-9-Cys-23, and Cys-14-Cys-28.

In terms of processing, this is a cyclic peptide. Contains 3 disulfide bonds.

In terms of biological role, probably participates in a plant defense mechanism (Potential). Binds to and induces leakage in phospholipd membranes, particularly ones containing 1-palmitoyl-2-oleophosphatidylethanolamine (POPE). This chain is Cyclotide mech-6, found in Melicytus chathamicus (Chatham Island mahoe).